A 449-amino-acid chain; its full sequence is Metacaspase-1 (449 aa).

Residues 1 to 132 are disordered; that stretch reads MFPGQGRHTY…YSRPPTNQQS (132 aa). Residues 10–26 show a composition bias toward low complexity; sequence YGGQQQLLQLQQYNYGP. A compositionally biased stretch (pro residues) spans 27 to 55; it reads PQGPPPNGYGPPPGPPPNGYGPPPGPPPQ. The span at 56-66 shows a compositional bias: polar residues; that stretch reads NSWGYGNPSGT. Low complexity-rich tracts occupy residues 67-91 and 98-112; these read QSSNQQRYQGQQSGQQNYNGGYQRP and QSGNQRGQPGQNGEP. Polar residues predominate over residues 119 to 132; that stretch reads GSGQYSRPPTNQQS. Catalysis depends on residues His-232 and Cys-293.

It belongs to the peptidase C14B family.

In terms of biological role, involved in cell death (apoptosis). This is Metacaspase-1 (MCA1) from Lodderomyces elongisporus (strain ATCC 11503 / CBS 2605 / JCM 1781 / NBRC 1676 / NRRL YB-4239) (Yeast).